We begin with the raw amino-acid sequence, 106 residues long: MYISRNMEQWNEFLDLMRKAFEQGKEQELLTLLLTADERDAVALRVQIVSQLLDKSLAQREIQQILNTSAATITRGSNMIKIMPPEFMDWVKQQLNHNNKNELGGD.

Residues Gln-59–Ile-82 mediate DNA binding.

The protein belongs to the TrpR family. As to quaternary structure, homodimer.

It localises to the cytoplasm. This protein is an aporepressor. When complexed with L-tryptophan it binds the operator region of the trp operon and prevents the initiation of transcription. This is Trp operon repressor homolog from Histophilus somni (strain 2336) (Haemophilus somnus).